Reading from the N-terminus, the 457-residue chain is Phosphoglucosamine mutase (457 aa).

The active-site Phosphoserine intermediate is S105. Mg(2+)-binding residues include S105, D247, D249, and D251. Phosphoserine is present on S105.

The protein belongs to the phosphohexose mutase family. Mg(2+) is required as a cofactor. Activated by phosphorylation.

It carries out the reaction alpha-D-glucosamine 1-phosphate = D-glucosamine 6-phosphate. Its function is as follows. Catalyzes the conversion of glucosamine-6-phosphate to glucosamine-1-phosphate. The polypeptide is Phosphoglucosamine mutase (Protochlamydia amoebophila (strain UWE25)).